A 1609-amino-acid chain; its full sequence is Transmembrane protein 131-like (1609 aa).

A signal peptide spans 1–40; it reads MAGLRRPQPGCYCRTAAAVNLLLGVFQVLLPCCRPGGAQG. The Extracellular segment spans residues 41–869; sequence QAIEPLPNVV…VVPGPSWEES (829 aa). N343, N439, N522, N593, N709, and N846 each carry an N-linked (GlcNAc...) asparagine glycan. The tract at residues 696–916 is required for Wnt-signaling inhibition and LRP6 degradation; that stretch reads DYGKVTSLIL…QNASSSSQQN (221 aa). Residues 870–890 form a helical membrane-spanning segment; it reads FWRLTVFFVSLSLLGVILIAF. Residues 891–1609 lie on the Cytoplasmic side of the membrane; it reads QQAQYILMEF…SRDSSYCGNV (719 aa). Disordered regions lie at residues 946-974, 991-1014, 1108-1144, 1159-1178, and 1304-1340; these read RGKN…YGHS, TAAA…SSLP, KTSK…NQQV, VDTK…EDMF, and SSSD…PMVD. The segment covering 952-961 has biased composition (polar residues); sequence PVNTPQSRIQ. Positions 991–1000 are enriched in low complexity; it reads TAAASSTSTT. Position 1122 is a phosphoserine (S1122). Residues 1304-1331 are compositionally biased toward low complexity; that stretch reads SSSDCGSSSGSVRASRGSWGSWSSTSSS.

This sequence belongs to the TMEM131 family. In terms of tissue distribution, expressed in thymocytes.

It is found in the cell membrane. It localises to the cytoplasm. Its subcellular location is the endoplasmic reticulum. Membrane-associated form that antagonizes canonical Wnt signaling by triggering lysosome-dependent degradation of Wnt-activated LRP6. Regulates thymocyte proliferation. The sequence is that of Transmembrane protein 131-like from Homo sapiens (Human).